Reading from the N-terminus, the 376-residue chain is ATP phosphoribosyltransferase regulatory subunit (376 aa).

This sequence belongs to the class-II aminoacyl-tRNA synthetase family. HisZ subfamily. In terms of assembly, heteromultimer composed of HisG and HisZ subunits.

The protein localises to the cytoplasm. Its pathway is amino-acid biosynthesis; L-histidine biosynthesis; L-histidine from 5-phospho-alpha-D-ribose 1-diphosphate: step 1/9. Functionally, required for the first step of histidine biosynthesis. May allow the feedback regulation of ATP phosphoribosyltransferase activity by histidine. In Brucella canis (strain ATCC 23365 / NCTC 10854 / RM-666), this protein is ATP phosphoribosyltransferase regulatory subunit.